The following is a 170-amino-acid chain: Ureidoglycolate lyase (170 aa).

The protein belongs to the ureidoglycolate lyase family. Homodimer. It depends on Ni(2+) as a cofactor.

It carries out the reaction (S)-ureidoglycolate = urea + glyoxylate. It functions in the pathway nitrogen metabolism; (S)-allantoin degradation. In terms of biological role, catalyzes the catabolism of the allantoin degradation intermediate (S)-ureidoglycolate, generating urea and glyoxylate. Involved in the utilization of allantoin as nitrogen source. This chain is Ureidoglycolate lyase, found in Pseudomonas syringae pv. tomato (strain ATCC BAA-871 / DC3000).